A 151-amino-acid chain; its full sequence is Deoxyuridine 5'-triphosphate nucleotidohydrolase (151 aa).

Substrate contacts are provided by residues 70 to 72, N83, 87 to 89, and M97; these read RSG and LID.

The protein belongs to the dUTPase family. Requires Mg(2+) as cofactor.

The enzyme catalyses dUTP + H2O = dUMP + diphosphate + H(+). It functions in the pathway pyrimidine metabolism; dUMP biosynthesis; dUMP from dCTP (dUTP route): step 2/2. Its function is as follows. This enzyme is involved in nucleotide metabolism: it produces dUMP, the immediate precursor of thymidine nucleotides and it decreases the intracellular concentration of dUTP so that uracil cannot be incorporated into DNA. This Shigella flexneri serotype 5b (strain 8401) protein is Deoxyuridine 5'-triphosphate nucleotidohydrolase.